The primary structure comprises 423 residues: Putative competence-damage inducible protein (423 aa).

It belongs to the CinA family.

In Streptococcus equi subsp. equi (strain 4047), this protein is Putative competence-damage inducible protein.